The sequence spans 222 residues: Eukaryotic translation initiation factor 3 subunit K (222 aa).

The PCI domain maps to 46–208; it reads YDLEANLAVL…KIKTKNITEK (163 aa).

Belongs to the eIF-3 subunit K family. Component of the eukaryotic translation initiation factor 3 (eIF-3) complex. The eIF-3 complex interacts with pix.

It is found in the cytoplasm. In terms of biological role, component of the eukaryotic translation initiation factor 3 (eIF-3) complex, which is involved in protein synthesis of a specialized repertoire of mRNAs and, together with other initiation factors, stimulates binding of mRNA and methionyl-tRNAi to the 40S ribosome. The eIF-3 complex specifically targets and initiates translation of a subset of mRNAs involved in cell proliferation. This chain is Eukaryotic translation initiation factor 3 subunit K, found in Drosophila sechellia (Fruit fly).